The sequence spans 257 residues: Large ribosomal subunit protein uL2 (257 aa).

A disordered region spans residues 210 to 231 (PHGGGNHQHIGKASTVKRGTSA).

This sequence belongs to the universal ribosomal protein uL2 family.

It localises to the cytoplasm. This chain is Large ribosomal subunit protein uL2 (RpL8), found in Mamestra brassicae (Cabbage moth).